We begin with the raw amino-acid sequence, 393 residues long: NAD(P)H-quinone oxidoreductase subunit H, chloroplastic (393 aa).

Belongs to the complex I 49 kDa subunit family. NDH is composed of at least 16 different subunits, 5 of which are encoded in the nucleus.

The protein localises to the plastid. It is found in the chloroplast thylakoid membrane. The catalysed reaction is a plastoquinone + NADH + (n+1) H(+)(in) = a plastoquinol + NAD(+) + n H(+)(out). It carries out the reaction a plastoquinone + NADPH + (n+1) H(+)(in) = a plastoquinol + NADP(+) + n H(+)(out). In terms of biological role, NDH shuttles electrons from NAD(P)H:plastoquinone, via FMN and iron-sulfur (Fe-S) centers, to quinones in the photosynthetic chain and possibly in a chloroplast respiratory chain. The immediate electron acceptor for the enzyme in this species is believed to be plastoquinone. Couples the redox reaction to proton translocation, and thus conserves the redox energy in a proton gradient. The chain is NAD(P)H-quinone oxidoreductase subunit H, chloroplastic from Angiopteris evecta (Mule's foot fern).